A 375-amino-acid chain; its full sequence is MQCALYDAGRCRSCQWITQPIPEQLSAKTADLKNLLADFPVEEWCAPVSGPEQGFRNKAKMVVSGSVEKPLLGMLHRDGTPEDLCDCPLYPASFAPVFAALKPFIARAGLTPYNVARKRGELKYILLTESQSDGGMMLRFVLRSETKLAQLRKALPWLQEQLPQLKVITVNIQPVHMAIMEGETEIYLTEQQALAERFNDVPLWIRPQSFFQTNPAVASQLYATARDWVRQLPVKHMWDLFCGVGGFGLHCATPDMQLTGIEIASEAIACAKQSAAELGLTRLQFQALDSTQFATAQGDVPELVLVNPPRRGIGKPLCDYLSTMAPRFIIYSSCNAQTMAKDIRELPGYRIERVQLFDMFPHTAHYEVMTLLVKQ.

4 residues coordinate [4Fe-4S] cluster: cysteine 3, cysteine 11, cysteine 14, and cysteine 87. Positions 212, 241, 262, and 307 each coordinate S-adenosyl-L-methionine. Cysteine 334 acts as the Nucleophile in catalysis.

Belongs to the class I-like SAM-binding methyltransferase superfamily. RNA M5U methyltransferase family. RlmC subfamily.

It carries out the reaction uridine(747) in 23S rRNA + S-adenosyl-L-methionine = 5-methyluridine(747) in 23S rRNA + S-adenosyl-L-homocysteine + H(+). Catalyzes the formation of 5-methyl-uridine at position 747 (m5U747) in 23S rRNA. This chain is 23S rRNA (uracil(747)-C(5))-methyltransferase RlmC, found in Shigella sonnei (strain Ss046).